The primary structure comprises 246 residues: Chemokine-binding protein (246 aa).

Residues 108 to 125 (SESSDGNTVNTRLSSVSP) show a composition bias toward polar residues. Positions 108–132 (SESSDGNTVNTRLSSVSPGQGKDSP) are disordered.

It belongs to the orthopoxvirus OPG001 family.

Its subcellular location is the secreted. In terms of biological role, inhibits host immune defense by binding to host chemokines. Binds host CC chemokines (beta chemokines) such as RANTES with high affinity, but not CXC or C chemokines (alpha and gamma chemokines). In Monkeypox virus, this protein is Chemokine-binding protein (OPG001).